Reading from the N-terminus, the 433-residue chain is sn-glycerol-3-phosphate-binding periplasmic protein UgpB (433 aa).

A signal peptide spans 1 to 25; the sequence is MFTRLITTSVLTGAIALTIGSQAFA. Residues Tyr-67, Asp-91, Ser-146, Ser-273, Gly-307, Tyr-346, and Arg-397 each coordinate sn-glycerol 3-phosphate.

It belongs to the bacterial solute-binding protein 1 family. As to quaternary structure, the complex is composed of two ATP-binding proteins (UgpC), two transmembrane proteins (UgpA and UgpE) and a solute-binding protein (UgpB).

The protein resides in the periplasm. In terms of biological role, part of the ABC transporter complex UgpBAEC involved in sn-glycerol-3-phosphate (G3P) import. Binds G3P. In Brucella abortus (strain 2308), this protein is sn-glycerol-3-phosphate-binding periplasmic protein UgpB (ugpB).